A 179-amino-acid chain; its full sequence is 6,7-dimethyl-8-ribityllumazine synthase (179 aa).

5-amino-6-(D-ribitylamino)uracil-binding positions include W13, 45-47, and 68-70; these read AVE and VVI. 73-74 is a (2S)-2-hydroxy-3-oxobutyl phosphate binding site; the sequence is DT. H76 functions as the Proton donor in the catalytic mechanism. 5-amino-6-(D-ribitylamino)uracil is bound at residue F101. R115 lines the (2S)-2-hydroxy-3-oxobutyl phosphate pocket. Positions 157–179 are disordered; it reads AKAAKKPAKAAAKTQKKKKKVRK.

The protein belongs to the DMRL synthase family.

The enzyme catalyses (2S)-2-hydroxy-3-oxobutyl phosphate + 5-amino-6-(D-ribitylamino)uracil = 6,7-dimethyl-8-(1-D-ribityl)lumazine + phosphate + 2 H2O + H(+). Its pathway is cofactor biosynthesis; riboflavin biosynthesis; riboflavin from 2-hydroxy-3-oxobutyl phosphate and 5-amino-6-(D-ribitylamino)uracil: step 1/2. In terms of biological role, catalyzes the formation of 6,7-dimethyl-8-ribityllumazine by condensation of 5-amino-6-(D-ribitylamino)uracil with 3,4-dihydroxy-2-butanone 4-phosphate. This is the penultimate step in the biosynthesis of riboflavin. The polypeptide is 6,7-dimethyl-8-ribityllumazine synthase (Bdellovibrio bacteriovorus (strain ATCC 15356 / DSM 50701 / NCIMB 9529 / HD100)).